Reading from the N-terminus, the 478-residue chain is Calcium/calmodulin-dependent protein kinase type II subunit alpha (478 aa).

The residue at position 13 (Y13) is a Phosphotyrosine. The 259-residue stretch at 13 to 271 (YQLFEELGKG…AAEALKHPWI (259 aa)) folds into the Protein kinase domain. ATP is bound by residues 19 to 27 (LGKGAFSVV) and K42. D135 acts as the Proton acceptor in catalysis. S257 is subject to Phosphoserine. A Phosphothreonine; by autocatalysis modification is found at T286. A calmodulin-binding region spans residues 290 to 300 (LKKFNARRKLK). Residues 310–320 (TRNFSGGKSGG) are interaction with BAALC. Residues 314 to 341 (SGGKSGGNKKSDGVKESSESTNTTIEDE) are disordered. The span at 322-331 (KKSDGVKESS) shows a compositional bias: basic and acidic residues. S330, S331, and S333 each carry phosphoserine. A phosphothreonine mark is found at T336 and T337. Residue S404 is modified to Phosphoserine.

It belongs to the protein kinase superfamily. CAMK Ser/Thr protein kinase family. CaMK subfamily. As to quaternary structure, there are 4 genes encoding calcium/calmodulin-dependent protein kinase type II chains: CAMK2A, CAMK2B, CAMK2G and CAMK2D. The corresponding proteins assemble into homo- or heteromultimeric holoenzymes composed of 12 subunits with two hexameric rings stacked one on top of the other. Interacts with BAALC. Interacts with MPDZ. Interacts with SYN1. Interacts with CAMK2N2. Interacts with SYNGAP1. Interacts with SYNPO2. Interacts with SHANK3. Interacts with GRIN2B. Interacts with CACNB2. Interacts with LRRC7. Interacts with GRM5. Interacts with DAGLA (via C-terminal); this interaction is enhanced by autophosphorylation of CAMK2A at Thr-286. Interacts with CAMK2N1; this interaction requires CAMK2A activation by Ca(2+). Mg(2+) is required as a cofactor. Autophosphorylation of Thr-286 following activation by Ca(2+)/calmodulin. Phosphorylation of Thr-286 locks the kinase into an activated state. In terms of processing, palmitoylated. Probably palmitoylated by ZDHHC3 and ZDHHC7.

The protein resides in the synapse. The protein localises to the postsynaptic density. It is found in the cell projection. It localises to the dendritic spine. Its subcellular location is the dendrite. It catalyses the reaction L-seryl-[protein] + ATP = O-phospho-L-seryl-[protein] + ADP + H(+). It carries out the reaction L-threonyl-[protein] + ATP = O-phospho-L-threonyl-[protein] + ADP + H(+). Its activity is regulated as follows. Activated by Ca(2+)/calmodulin. Binding of calmodulin results in conformational change that relieves intrasteric autoinhibition and allows autophosphorylation of Thr-286 which turns the kinase in a constitutively active form and confers to the kinase a Ca(2+)-independent activity. Calcium/calmodulin-dependent protein kinase that functions autonomously after Ca(2+)/calmodulin-binding and autophosphorylation, and is involved in various processes, such as synaptic plasticity, neurotransmitter release and long-term potentiation. Member of the NMDAR signaling complex in excitatory synapses, it regulates NMDAR-dependent potentiation of the AMPAR and therefore excitatory synaptic transmission. Regulates dendritic spine development. Also regulates the migration of developing neurons. Phosphorylates the transcription factor FOXO3 to activate its transcriptional activity. Phosphorylates the transcription factor ETS1 in response to calcium signaling, thereby decreasing ETS1 affinity for DNA. In response to interferon-gamma (IFN-gamma) stimulation, catalyzes phosphorylation of STAT1, stimulating the JAK-STAT signaling pathway. In response to interferon-beta (IFN-beta) stimulation, stimulates the JAK-STAT signaling pathway. Acts as a negative regulator of 2-arachidonoylglycerol (2-AG)-mediated synaptic signaling via modulation of DAGLA activity. In Pongo abelii (Sumatran orangutan), this protein is Calcium/calmodulin-dependent protein kinase type II subunit alpha (CAMK2A).